The primary structure comprises 415 residues: Serine--tRNA ligase (415 aa).

230–232 (TAE) provides a ligand contact to L-serine. Position 261–263 (261–263 (RKE)) interacts with ATP. An L-serine-binding site is contributed by glutamate 284. 348-351 (EISS) lines the ATP pocket. Serine 382 is a binding site for L-serine.

This sequence belongs to the class-II aminoacyl-tRNA synthetase family. Type-1 seryl-tRNA synthetase subfamily. As to quaternary structure, homodimer. The tRNA molecule binds across the dimer.

It is found in the cytoplasm. The catalysed reaction is tRNA(Ser) + L-serine + ATP = L-seryl-tRNA(Ser) + AMP + diphosphate + H(+). It carries out the reaction tRNA(Sec) + L-serine + ATP = L-seryl-tRNA(Sec) + AMP + diphosphate + H(+). It functions in the pathway aminoacyl-tRNA biosynthesis; selenocysteinyl-tRNA(Sec) biosynthesis; L-seryl-tRNA(Sec) from L-serine and tRNA(Sec): step 1/1. In terms of biological role, catalyzes the attachment of serine to tRNA(Ser). Is also able to aminoacylate tRNA(Sec) with serine, to form the misacylated tRNA L-seryl-tRNA(Sec), which will be further converted into selenocysteinyl-tRNA(Sec). This chain is Serine--tRNA ligase, found in Sulfurimonas denitrificans (strain ATCC 33889 / DSM 1251) (Thiomicrospira denitrificans (strain ATCC 33889 / DSM 1251)).